Here is a 591-residue protein sequence, read N- to C-terminus: Dihydroxyacetone kinase 2 (591 aa).

The DhaK domain maps to 8 to 344; it reads SDGNIVTPYL…FDYPTTASGW (337 aa). The segment at 40 to 59 is disordered; that stretch reads ASAPNSGNPPKVSLVSGGGS. Substrate is bound by residues 58 to 61, Lys-109, and Asp-114; that span reads GSGH. The active-site Tele-hemiaminal-histidine intermediate is the His-223. The region spanning 384-587 is the DhaL domain; sequence DTFAKILLAG…LAALLDGFVT (204 aa). Residues 413–416, 459–460, 511–512, and 572–574 each bind ATP; these read DGDC, TS, TL, and DPG.

The protein belongs to the dihydroxyacetone kinase (DAK) family.

It catalyses the reaction dihydroxyacetone + ATP = dihydroxyacetone phosphate + ADP + H(+). The enzyme catalyses D-glyceraldehyde + ATP = D-glyceraldehyde 3-phosphate + ADP + H(+). It functions in the pathway polyol metabolism; glycerol fermentation; glycerone phosphate from glycerol (oxidative route): step 2/2. Catalyzes both the phosphorylation of dihydroxyacetone and of glyceraldehyde. In Saccharomyces cerevisiae (strain ATCC 204508 / S288c) (Baker's yeast), this protein is Dihydroxyacetone kinase 2 (DAK2).